The chain runs to 299 residues: 4-diphosphocytidyl-2-C-methyl-D-erythritol kinase (299 aa).

Residue Lys16 is part of the active site. An ATP-binding site is contributed by 97–107 (PVASGIGGGSA). Asp140 is a catalytic residue.

Belongs to the GHMP kinase family. IspE subfamily.

The catalysed reaction is 4-CDP-2-C-methyl-D-erythritol + ATP = 4-CDP-2-C-methyl-D-erythritol 2-phosphate + ADP + H(+). It functions in the pathway isoprenoid biosynthesis; isopentenyl diphosphate biosynthesis via DXP pathway; isopentenyl diphosphate from 1-deoxy-D-xylulose 5-phosphate: step 3/6. Its function is as follows. Catalyzes the phosphorylation of the position 2 hydroxy group of 4-diphosphocytidyl-2C-methyl-D-erythritol. This Roseobacter denitrificans (strain ATCC 33942 / OCh 114) (Erythrobacter sp. (strain OCh 114)) protein is 4-diphosphocytidyl-2-C-methyl-D-erythritol kinase.